The primary structure comprises 177 residues: Protein ParB (177 aa).

Residues 1-26 (MKRRSYAMLRAAAALAVLVVASPAWA) form the signal peptide. The region spanning 27 to 157 (ELRGEVVRII…RGKRVGLWSD (131 aa)) is the TNase-like domain. Active-site residues include Arg53, Glu61, and Arg95.

As to quaternary structure, monomer. Ca(2+) serves as cofactor. Post-translationally, the N-terminus is blocked.

It localises to the secreted. Endonuclease activity is inhibited by EDTA. Functionally, involved in plasmid partition. An endonuclease that acts on supercoiled dsDNA, converting it first to open circular DNA and then linearizing it. Preferentially cleaves regions in dsDNA that are capable of forming ssDNA, such as AT-rich regions and sequences that can form cruciforms. Has poor endonucleolytic activity on linear DNA, has 5'-3' exonuclease activity on dsDNA cleaving generating 3'-phosphonucleotides. In Escherichia coli, this protein is Protein ParB.